Consider the following 187-residue polypeptide: Probable nicotinate-nucleotide adenylyltransferase (187 aa).

This sequence belongs to the NadD family.

It carries out the reaction nicotinate beta-D-ribonucleotide + ATP + H(+) = deamido-NAD(+) + diphosphate. The protein operates within cofactor biosynthesis; NAD(+) biosynthesis; deamido-NAD(+) from nicotinate D-ribonucleotide: step 1/1. Its function is as follows. Catalyzes the reversible adenylation of nicotinate mononucleotide (NaMN) to nicotinic acid adenine dinucleotide (NaAD). In Agrobacterium fabrum (strain C58 / ATCC 33970) (Agrobacterium tumefaciens (strain C58)), this protein is Probable nicotinate-nucleotide adenylyltransferase.